The following is a 97-amino-acid chain: Co-chaperonin GroES (97 aa).

Belongs to the GroES chaperonin family. As to quaternary structure, heptamer of 7 subunits arranged in a ring. Interacts with the chaperonin GroEL.

The protein localises to the cytoplasm. In terms of biological role, together with the chaperonin GroEL, plays an essential role in assisting protein folding. The GroEL-GroES system forms a nano-cage that allows encapsulation of the non-native substrate proteins and provides a physical environment optimized to promote and accelerate protein folding. GroES binds to the apical surface of the GroEL ring, thereby capping the opening of the GroEL channel. This is Co-chaperonin GroES from Klebsiella pneumoniae subsp. pneumoniae (strain ATCC 700721 / MGH 78578).